Consider the following 802-residue polypeptide: MANTKKTTLDITGMTCAACSNRIEKKLNKLDDVNAQVNLTTEKATVEYNPDQHDVQEFINTIQHLGYGVAVETVELDITGMTCAACSSRIEKVLNKMDGVQNATVNLTTEQAKVDYYPEETDADKLVTRIQKLGYDASIKDNNKDQTSRKAEALQHKLIKLIISAVLSLPLLMLMFVHLFNMHIPALFTNPWFQFILATPVQFIIGWQFYVGAYKNLRNGGANMDVLVAVGTSAAYFYSIYEMVRWLNGSTTQPHLYFETSAVLITLILFGKYLEARAKSQTTNALGELLSLQAKEARILKDGNEVMIPLNEVHVGDTLIVKPGEKIPVDGKIIKGMTAIDESMLTGESIPVEKNVDDTVIGSTMNKNGTITMTATKVGGDTALANIIKVVEEAQSSKAPIQRLADIISGYFVPIVVGIALLTFIVWITLVTPGTFEPALVASISVLVIACPCALGLATPTSIMVGTGRAAENGILFKGGEFVERTHQIDTIVLDKTGTITNGRPVVTDYHGDNQTLQLLATAEKDSEHPLAEAIVNYAKEKQLILTETTTFKAVPGHGIEATIDHHYILVGNRKLMADNDISLPKHISDDLTHYERDGKTAMLIAVNYSLTGIIAVADTVKDHAKDAIKQLHDMGIEVAMLTGDNKNTAQAIAKQVGIDTVIADILPEEKAAQIAKLQQQGKKVAMVGDGVNDAPALVKADIGIAIGTGTEVAIEAADITILGGDLMLIPKAIYASKATIRNIRQNLFWAFGYNIAGIPIAALGLLAPWVAGAAMALSSVSVVTNALRLKKMRLEPRRKDA.

HMA domains follow at residues 5 to 70 (KKTT…YGVA) and 72 to 138 (ETVE…YDAS). Cu(+)-binding residues include C16, C19, C83, and C86. 6 helical membrane passes run 161–181 (LIIS…HLFN), 192–212 (WFQF…FYVG), 224–244 (MDVL…YEMV), 256–276 (LYFE…YLEA), 411–431 (YFVP…ITLV), and 438–458 (PALV…LGLA). D495 acts as the 4-aspartylphosphate intermediate in catalysis. Mg(2+) is bound by residues D690 and D694. 2 consecutive transmembrane segments (helical) span residues 748 to 767 (LFWA…LGLL) and 771 to 790 (VAGA…ALRL).

This sequence belongs to the cation transport ATPase (P-type) (TC 3.A.3) family. Type IB subfamily.

The protein localises to the cell membrane. It carries out the reaction Cu(+)(in) + ATP + H2O = Cu(+)(out) + ADP + phosphate + H(+). Functionally, involved in copper export. This Staphylococcus aureus (strain USA300 / TCH1516) protein is Copper-exporting P-type ATPase (copA).